A 141-amino-acid chain; its full sequence is Drosulfakinins (141 aa).

A signal peptide spans 1–31 (MGLRSCTHLATLFMTLWAVAFCFLVVVPIPA). Positions 32-73 (QTTSLQNAKDDRRLQELESKIGAESDQTNANLVGPSFSRFGD) are excised as a propeptide. Phe82 carries the post-translational modification Phenylalanine amide. The propeptide occupies 86-111 (VPLISRPMIPIELDLLMDNDDERTKA). A Sulfotyrosine modification is found at Tyr117. Phe122 is subject to Phenylalanine amide. Tyr134 bears the Sulfotyrosine mark. Phe139 carries the post-translational modification Phenylalanine amide.

The protein belongs to the gastrin/cholecystokinin family.

Its subcellular location is the secreted. In terms of biological role, drosulfakinin-0 (DSK 0) plays diverse biological roles including regulating gut muscle contraction in adults but not in larvae. This Drosophila simulans (Fruit fly) protein is Drosulfakinins.